The following is a 364-amino-acid chain: MASEKRILIMAGGTGGHVFPALAVAKALAKQGWQVRWLGTADRMEARLVPQHGFDIDFIDIKGVRGNGLIRKLAAPFKILRSIMQAREVIKEFKPHVVLGMGGFASGPGGVAAKLSGIPLVLHEQNAIPGMTNKLLSRIASRVLCAFENTFEGNAEVVGNPIRSELIALGRSEQPIVPDDALRVLVVGGSLGAKIFNDLMPSVTAAVAQHHSMTVWHQVGKGNQAQVEAEYLQLGQSGSVKVAEFIDDMEAAYRWADVILCRAGALTVSEVAAVGLPSLLVPYPHAVDDHQTKNAQVLVEAGGAFLLPQTVLDSEKLISKLQILASDRKALIEMGQLAKSVAVLDATERVAAVCIALASKEKDD.

Residues 14-16, Asn126, Arg163, Ser190, Ile246, 265-270, and Gln291 each bind UDP-N-acetyl-alpha-D-glucosamine; these read TGG and ALTVSE.

It belongs to the glycosyltransferase 28 family. MurG subfamily.

The protein resides in the cell inner membrane. The enzyme catalyses di-trans,octa-cis-undecaprenyl diphospho-N-acetyl-alpha-D-muramoyl-L-alanyl-D-glutamyl-meso-2,6-diaminopimeloyl-D-alanyl-D-alanine + UDP-N-acetyl-alpha-D-glucosamine = di-trans,octa-cis-undecaprenyl diphospho-[N-acetyl-alpha-D-glucosaminyl-(1-&gt;4)]-N-acetyl-alpha-D-muramoyl-L-alanyl-D-glutamyl-meso-2,6-diaminopimeloyl-D-alanyl-D-alanine + UDP + H(+). The protein operates within cell wall biogenesis; peptidoglycan biosynthesis. Cell wall formation. Catalyzes the transfer of a GlcNAc subunit on undecaprenyl-pyrophosphoryl-MurNAc-pentapeptide (lipid intermediate I) to form undecaprenyl-pyrophosphoryl-MurNAc-(pentapeptide)GlcNAc (lipid intermediate II). The chain is UDP-N-acetylglucosamine--N-acetylmuramyl-(pentapeptide) pyrophosphoryl-undecaprenol N-acetylglucosamine transferase from Shewanella loihica (strain ATCC BAA-1088 / PV-4).